The following is a 363-amino-acid chain: Endopolygalacturonase B (363 aa).

The first 20 residues, 1 to 20, serve as a signal peptide directing secretion; the sequence is MQLLQSSVIAATVGAALVAA. Positions 21–28 are excised as a propeptide; the sequence is VPVELKAR. Cysteine 31 and cysteine 46 are oxidised to a cystine. PbH1 repeat units lie at residues 158 to 187, 188 to 209, 210 to 230, 239 to 260, 268 to 290, and 302 to 347; these read SDNL…DVGS, STYI…AINS, GSHI…SIGS, VEDV…RIKT, VSNV…IVEQ, and TNGI…SITG. An N-linked (GlcNAc...) asparagine glycan is attached at asparagine 162. The active-site Proton donor is the aspartate 202. Residues cysteine 204 and cysteine 220 are joined by a disulfide bond. The active site involves histidine 224. Disulfide bonds link cysteine 330/cysteine 335 and cysteine 354/cysteine 363. N-linked (GlcNAc...) asparagine glycosylation occurs at asparagine 356.

The protein belongs to the glycosyl hydrolase 28 family.

Its subcellular location is the secreted. It catalyses the reaction (1,4-alpha-D-galacturonosyl)n+m + H2O = (1,4-alpha-D-galacturonosyl)n + (1,4-alpha-D-galacturonosyl)m.. Functionally, involved in maceration and soft-rotting of plant tissue. Hydrolyzes the 1,4-alpha glycosidic bonds of de-esterified pectate in the smooth region of the plant cell wall. The chain is Endopolygalacturonase B (pgaB) from Aspergillus oryzae (strain ATCC 42149 / RIB 40) (Yellow koji mold).